Reading from the N-terminus, the 122-residue chain is MKYVLILCVITLATVAYAQPQCVGCPSEVKGDKLKQSEETLNKSLSKLAAGDGPTYKLVKINSATTQVVSGSKDVINADLKDENDKTKTCDITIWSQPWLENGIEVTFNCPGEPKVVKKHSA.

A signal peptide spans 1-20 (MKYVLILCVITLATVAYAQP). Glutamine 21 is subject to Pyrrolidone carboxylic acid. The Secondary area of contact motif lies at 67–71 (QVVSG).

The protein belongs to the cystatin family.

Functionally, selectively inhibits the activity of cysteine proteinase of hemocytes, protecting developing adult tissue in pupae from attack by the proteinase. In Sarcophaga peregrina (Flesh fly), this protein is Sarcocystatin-A.